We begin with the raw amino-acid sequence, 431 residues long: Phosphoribosylamine--glycine ligase (431 aa).

An ATP-grasp domain is found at 107-315 (RWLMEEYKIP…LVEIGEEIVD (209 aa)). 134-193 (IDDFGRPVVVKPLGLTGGKGVKVVGYQLKDNEEAKAYAEELIKRDGKVLIEERTDGVEFT) contacts ATP. Mg(2+) is bound by residues Gln273, Glu285, and Asn287. Residues Gln273, Glu285, and Asn287 each coordinate Mn(2+).

This sequence belongs to the GARS family. The cofactor is Mg(2+). Requires Mn(2+) as cofactor.

It catalyses the reaction 5-phospho-beta-D-ribosylamine + glycine + ATP = N(1)-(5-phospho-beta-D-ribosyl)glycinamide + ADP + phosphate + H(+). It functions in the pathway purine metabolism; IMP biosynthesis via de novo pathway; N(1)-(5-phospho-D-ribosyl)glycinamide from 5-phospho-alpha-D-ribose 1-diphosphate: step 2/2. This Thermococcus kodakarensis (strain ATCC BAA-918 / JCM 12380 / KOD1) (Pyrococcus kodakaraensis (strain KOD1)) protein is Phosphoribosylamine--glycine ligase.